A 20-amino-acid polypeptide reads, in one-letter code: L-amino-acid oxidase L1 (20 aa).

Belongs to the flavin monoamine oxidase family. FIG1 subfamily. As to quaternary structure, monomer. This is in contrast with most of its orthologs, that are non-covalently linked homodimers. Requires FAD as cofactor. N-glycosylated. Expressed by the venom gland.

The protein localises to the secreted. The catalysed reaction is an L-alpha-amino acid + O2 + H2O = a 2-oxocarboxylate + H2O2 + NH4(+). The enzyme catalyses L-leucine + O2 + H2O = 4-methyl-2-oxopentanoate + H2O2 + NH4(+). It catalyses the reaction L-phenylalanine + O2 + H2O = 3-phenylpyruvate + H2O2 + NH4(+). It carries out the reaction L-tryptophan + O2 + H2O = indole-3-pyruvate + H2O2 + NH4(+). The catalysed reaction is L-methionine + O2 + H2O = 4-methylsulfanyl-2-oxobutanoate + H2O2 + NH4(+). The enzyme catalyses L-isoleucine + O2 + H2O = (S)-3-methyl-2-oxopentanoate + H2O2 + NH4(+). It catalyses the reaction L-tyrosine + O2 + H2O = 3-(4-hydroxyphenyl)pyruvate + H2O2 + NH4(+). Functionally, catalyzes an oxidative deamination of predominantly hydrophobic and aromatic L-amino acids, thus producing hydrogen peroxide that may contribute to the diverse toxic effects of this enzyme. Is active on L-Met, L-Ile, L-Leu, L-Phe, L-Trp, and L-Tyr. Exhibits diverse biological activities, such as hemorrhage, hemolysis, edema, apoptosis of vascular endothelial cells or tumor cell lines, antibacterial and antiparasitic activities, as well as regulation of platelet aggregation. Its effect on platelets is controversial, since it either induces aggregation or inhibits agonist-induced aggregation. These different effects are probably due to different experimental conditions. This chain is L-amino-acid oxidase L1, found in Daboia russelii (Russel's viper).